The primary structure comprises 97 residues: Large ribosomal subunit protein bL31 (97 aa).

Residues 76–97 (KTPKKAKGKTEEYTKHRSLNEL) are disordered. Over residues 83–97 (GKTEEYTKHRSLNEL) the composition is skewed to basic and acidic residues.

This sequence belongs to the bacterial ribosomal protein bL31 family. Type A subfamily. As to quaternary structure, part of the 50S ribosomal subunit.

Its function is as follows. Binds the 23S rRNA. The protein is Large ribosomal subunit protein bL31 of Mycoplasma pneumoniae (strain ATCC 29342 / M129 / Subtype 1) (Mycoplasmoides pneumoniae).